Here is a 162-residue protein sequence, read N- to C-terminus: Peptidyl-prolyl cis-trans isomerase (162 aa).

The PPIase cyclophilin-type domain maps to 16–162; that stretch reads KTAYATIKTN…IESVVFSPSL (147 aa).

The protein belongs to the cyclophilin-type PPIase family.

The enzyme catalyses [protein]-peptidylproline (omega=180) = [protein]-peptidylproline (omega=0). Its function is as follows. PPIases accelerate the folding of proteins. It catalyzes the cis-trans isomerization of proline imidic peptide bonds in oligopeptides. The polypeptide is Peptidyl-prolyl cis-trans isomerase (ppiA) (Helicobacter pylori (strain J99 / ATCC 700824) (Campylobacter pylori J99)).